The sequence spans 202 residues: MKVLTARQQQVYDLIRDHIAHSGMPPTRAEIAQQLGFRSPNAAEEHLKALARKGVIEIVSGASRGIRLLMEEETGIPLVGRVAAGEPLLAQEHIECRYQVDPAMFKPSADFLLRVSGMSMKNIGIMDGDLLAVHKTEDVRNGQIVVARIDDEVTVKRLKKQGNTVHLLAENEEFAPIVVDLRQQSFSIEGLAVGVIRNSDWS.

The segment at residues Arg-28–Lys-48 is a DNA-binding region (H-T-H motif). Residues Ser-119 and Lys-156 each act as for autocatalytic cleavage activity in the active site.

Belongs to the peptidase S24 family. As to quaternary structure, homodimer.

The enzyme catalyses Hydrolysis of Ala-|-Gly bond in repressor LexA.. Its function is as follows. Represses a number of genes involved in the response to DNA damage (SOS response), including recA and lexA. In the presence of single-stranded DNA, RecA interacts with LexA causing an autocatalytic cleavage which disrupts the DNA-binding part of LexA, leading to derepression of the SOS regulon and eventually DNA repair. This chain is LexA repressor, found in Pectobacterium atrosepticum (strain SCRI 1043 / ATCC BAA-672) (Erwinia carotovora subsp. atroseptica).